Here is a 122-residue protein sequence, read N- to C-terminus: UPF0102 protein CPE1705 (122 aa).

The protein belongs to the UPF0102 family.

This chain is UPF0102 protein CPE1705, found in Clostridium perfringens (strain 13 / Type A).